The sequence spans 395 residues: Phosphoglycerate kinase (395 aa).

Substrate-binding positions include aspartate 20 to asparagine 22, arginine 36, histidine 59 to arginine 62, arginine 120, and arginine 157. Residues lysine 208, glycine 296, glutamate 327, and glycine 353–threonine 356 each bind ATP.

It belongs to the phosphoglycerate kinase family. As to quaternary structure, monomer.

The protein localises to the cytoplasm. It carries out the reaction (2R)-3-phosphoglycerate + ATP = (2R)-3-phospho-glyceroyl phosphate + ADP. Its pathway is carbohydrate degradation; glycolysis; pyruvate from D-glyceraldehyde 3-phosphate: step 2/5. This Tropheryma whipplei (strain Twist) (Whipple's bacillus) protein is Phosphoglycerate kinase.